The chain runs to 420 residues: 3-phosphoshikimate 1-carboxyvinyltransferase (420 aa).

Residues lysine 20, serine 21, and arginine 25 each contribute to the 3-phosphoshikimate site. Position 20 (lysine 20) interacts with phosphoenolpyruvate. Residues glycine 90 and arginine 118 each coordinate phosphoenolpyruvate. Serine 159, serine 160, glutamine 161, serine 187, aspartate 303, and lysine 330 together coordinate 3-phosphoshikimate. Glutamine 161 is a binding site for phosphoenolpyruvate. Aspartate 303 acts as the Proton acceptor in catalysis. Phosphoenolpyruvate contacts are provided by arginine 334, arginine 376, and lysine 402.

Belongs to the EPSP synthase family. In terms of assembly, monomer.

The protein localises to the cytoplasm. It carries out the reaction 3-phosphoshikimate + phosphoenolpyruvate = 5-O-(1-carboxyvinyl)-3-phosphoshikimate + phosphate. The protein operates within metabolic intermediate biosynthesis; chorismate biosynthesis; chorismate from D-erythrose 4-phosphate and phosphoenolpyruvate: step 6/7. Catalyzes the transfer of the enolpyruvyl moiety of phosphoenolpyruvate (PEP) to the 5-hydroxyl of shikimate-3-phosphate (S3P) to produce enolpyruvyl shikimate-3-phosphate and inorganic phosphate. This chain is 3-phosphoshikimate 1-carboxyvinyltransferase, found in Brachyspira hyodysenteriae (strain ATCC 49526 / WA1).